A 220-amino-acid chain; its full sequence is Cysteine-rich venom protein (220 aa).

In terms of domain architecture, SCP spans 20–147 (DLHNSLRRSV…AYKYFYVCQY (128 aa)). 8 cysteine pairs are disulfide-bonded: C56–C134, C73–C148, C129–C145, C167–C174, C170–C179, C183–C215, C192–C209, and C200–C213. Residues 183–215 (CTREDEFINCNDLVKQGCQTDYLKSNCAASCFC) enclose the ShKT domain.

In terms of tissue distribution, expressed by the venom gland.

The protein localises to the secreted. Functionally, blocks contraction of smooth muscle elicited by high potassium-induced depolarization, but does not block caffeine-stimulated contraction. May target voltage-gated calcium channels in smooth muscle. This is Cysteine-rich venom protein from Echis coloratus (Carpet viper).